A 306-amino-acid chain; its full sequence is Large ribosomal subunit protein mL45 (306 aa).

This sequence belongs to the mitochondrion-specific ribosomal protein mL45 family. In terms of assembly, component of the mitochondrial ribosome large subunit (39S) which comprises a 16S rRNA and about 50 distinct proteins.

The protein resides in the mitochondrion. Its function is as follows. Component of the mitochondrial large ribosomal subunit (mt-LSU). Within the mitochondrial ribosomes, required to direct the nascent polypeptide toward the tunnel exit and position the exit at a distance from the membrane surface. In Bos taurus (Bovine), this protein is Large ribosomal subunit protein mL45 (MRPL45).